Here is a 238-residue protein sequence, read N- to C-terminus: Ribonuclease PH (238 aa).

Phosphate contacts are provided by residues Arg-86 and 124 to 126; that span reads GTR.

This sequence belongs to the RNase PH family. In terms of assembly, homohexameric ring arranged as a trimer of dimers.

The catalysed reaction is tRNA(n+1) + phosphate = tRNA(n) + a ribonucleoside 5'-diphosphate. Phosphorolytic 3'-5' exoribonuclease that plays an important role in tRNA 3'-end maturation. Removes nucleotide residues following the 3'-CCA terminus of tRNAs; can also add nucleotides to the ends of RNA molecules by using nucleoside diphosphates as substrates, but this may not be physiologically important. Probably plays a role in initiation of 16S rRNA degradation (leading to ribosome degradation) during starvation. The protein is Ribonuclease PH of Maricaulis maris (strain MCS10) (Caulobacter maris).